A 376-amino-acid polypeptide reads, in one-letter code: Lipid-A-disaccharide synthase (376 aa).

This sequence belongs to the LpxB family.

It catalyses the reaction a lipid X + a UDP-2-N,3-O-bis[(3R)-3-hydroxyacyl]-alpha-D-glucosamine = a lipid A disaccharide + UDP + H(+). It functions in the pathway bacterial outer membrane biogenesis; LPS lipid A biosynthesis. In terms of biological role, condensation of UDP-2,3-diacylglucosamine and 2,3-diacylglucosamine-1-phosphate to form lipid A disaccharide, a precursor of lipid A, a phosphorylated glycolipid that anchors the lipopolysaccharide to the outer membrane of the cell. The sequence is that of Lipid-A-disaccharide synthase from Coxiella burnetii (strain Dugway 5J108-111).